The primary structure comprises 545 residues: Glucose-6-phosphate isomerase (545 aa).

E351 functions as the Proton donor in the catalytic mechanism. Residues H382 and K510 contribute to the active site.

This sequence belongs to the GPI family.

Its subcellular location is the cytoplasm. The enzyme catalyses alpha-D-glucose 6-phosphate = beta-D-fructose 6-phosphate. It participates in carbohydrate biosynthesis; gluconeogenesis. Its pathway is carbohydrate degradation; glycolysis; D-glyceraldehyde 3-phosphate and glycerone phosphate from D-glucose: step 2/4. Functionally, catalyzes the reversible isomerization of glucose-6-phosphate to fructose-6-phosphate. In Helicobacter pylori (strain Shi470), this protein is Glucose-6-phosphate isomerase.